Reading from the N-terminus, the 84-residue chain is Cell division topological specificity factor (84 aa).

The protein belongs to the MinE family.

Functionally, prevents the cell division inhibition by proteins MinC and MinD at internal division sites while permitting inhibition at polar sites. This ensures cell division at the proper site by restricting the formation of a division septum at the midpoint of the long axis of the cell. In Burkholderia mallei (strain NCTC 10247), this protein is Cell division topological specificity factor.